Consider the following 200-residue polypeptide: ASI1-immunoprecipitated protein 1 (200 aa).

Residues 18–101 enclose the RRM domain; it reads RTVYVDELTP…RPVRACAAEP (84 aa).

In terms of assembly, component of the ASI1-AIPP1-EDM2 (AAE) RNA regulatory complex composed of at least AIPP1/EDM3, ASI1 and EDM2 and may contain CPL2, AIPP2 and AIPP3/BDT1. Binds directly to ASI1 and EDM2 and may function as a bridge protein between them. Co-associates with EDM2 to histone H3 lysine 9 dimethylation (H3K9me2)-marked chromatin and transcripts at a critical proximal polyadenylation site of RPP7 to hamper proximal transcript polyadeylation/termination.

The protein resides in the nucleus. Functionally, prevents gene silencing by suppressing CHG methylation as well as histone H3 lysine 9 dimethylation (H3K9me2) status at target loci. Collaboratively with ASI1 and EDM2, the AAE complex regulates alternative RNA processing (e.g. alternative splicing) and epigenetic silencing (e.g. H3K9me2) of intronic heterochromatin-containing genes as well as genic heterochromatin-containing genes by promoting distal 3' polyadenylation, thus being required for the accumulation of their full-length transcripts. May also modulate transposable elements (TE) expression. Mediates RPP7-dependent race-specific disease resistance by promoting histone H3 lysine 9 dimethylation (H3K9me2) at the proximal RPP7 polyadenylation site, thus controlling alternative polyadenylation of RPP7 immune receptor transcripts and facilitating 2-phosphoserine RNAPII occupancy. In cv. Columbia, required for RPP7-dependent disease resistance against the Hyaloperonospora arabidopsidis isolate Hiks1. The sequence is that of ASI1-immunoprecipitated protein 1 from Arabidopsis thaliana (Mouse-ear cress).